A 407-amino-acid chain; its full sequence is Magnesium-protoporphyrin IX monomethyl ester [oxidative] cyclase 1, chloroplastic (407 aa).

Over residues 1–10 the composition is skewed to polar residues; it reads MQTTLKQQRA. Positions 1–28 are disordered; the sequence is MQTTLKQQRASGRVSARQPFRSAAVARP.

It belongs to the AcsF family. It depends on Fe cation as a cofactor.

The protein localises to the plastid. It localises to the chloroplast thylakoid membrane. The catalysed reaction is Mg-protoporphyrin IX 13-monomethyl ester + 3 NADPH + 3 O2 + 2 H(+) = 3,8-divinyl protochlorophyllide a + 3 NADP(+) + 5 H2O. The protein operates within porphyrin-containing compound metabolism; chlorophyll biosynthesis. Catalyzes the formation of the isocyclic ring in chlorophyll biosynthesis under oxygen- and copper-deficient conditions. Mediates the cyclase reaction, which results in the formation of divinylprotochlorophyllide (Pchlide) characteristic of all chlorophylls from magnesium-protoporphyrin IX 13-monomethyl ester (MgPMME). This chain is Magnesium-protoporphyrin IX monomethyl ester [oxidative] cyclase 1, chloroplastic (CRD1), found in Chlamydomonas reinhardtii (Chlamydomonas smithii).